We begin with the raw amino-acid sequence, 318 residues long: Glycine--tRNA ligase alpha subunit (318 aa).

It belongs to the class-II aminoacyl-tRNA synthetase family. Tetramer of two alpha and two beta subunits.

The protein resides in the cytoplasm. The enzyme catalyses tRNA(Gly) + glycine + ATP = glycyl-tRNA(Gly) + AMP + diphosphate. This is Glycine--tRNA ligase alpha subunit from Saccharophagus degradans (strain 2-40 / ATCC 43961 / DSM 17024).